Consider the following 125-residue polypeptide: Glycine cleavage system H protein (125 aa).

Positions 22–104 (SYIIGITDFA…YDTGWILKLT (83 aa)) constitute a Lipoyl-binding domain. At Lys63 the chain carries N6-lipoyllysine.

This sequence belongs to the GcvH family. In terms of assembly, the glycine cleavage system is composed of four proteins: P, T, L and H. Requires (R)-lipoate as cofactor.

The glycine cleavage system catalyzes the degradation of glycine. The H protein shuttles the methylamine group of glycine from the P protein to the T protein. Functionally, is also involved in protein lipoylation via its role as an octanoyl/lipoyl carrier protein intermediate. This Listeria innocua serovar 6a (strain ATCC BAA-680 / CLIP 11262) protein is Glycine cleavage system H protein.